A 231-amino-acid chain; its full sequence is MRAACVIILASLTVFMSPGLQCQPLAGEGDPSLDELFQRAESLLIRSILTQTEDENHGDGEQTEWLEKRQHPGKRQHPGKREDTDYEDEAAALQKRQHPGKREEEEDSARLRRQHPGKRLSLEHMMLEEPTAQSELAKRQHPGRRYLMLLHKRQHPGRRELHEAAGDFSDLAKRQHPGKRLCEDWDVTGCDQASILLELLDNVNKSRAEEKRQHPGKRFALEDELTEQESL.

The signal sequence occupies residues 1–22; that stretch reads MRAACVIILASLTVFMSPGLQC. A disordered region spans residues 50 to 139; the sequence is TQTEDENHGD…PTAQSELAKR (90 aa). Basic and acidic residues predominate over residues 54-70; that stretch reads DENHGDGEQTEWLEKRQ. Glutamine 70 bears the Pyrrolidone carboxylic acid mark. Position 72 is a proline amide (proline 72). At glutamine 76 the chain carries Pyrrolidone carboxylic acid. Proline 78 is modified (proline amide). Glutamine 97 is subject to Pyrrolidone carboxylic acid. The residue at position 99 (proline 99) is a Proline amide. At glutamine 114 the chain carries Pyrrolidone carboxylic acid. Proline 116 is subject to Proline amide. Glutamine 140 carries the pyrrolidone carboxylic acid modification. Proline 142 bears the Proline amide mark. Glutamine 154 carries the post-translational modification Pyrrolidone carboxylic acid. Proline 156 bears the Proline amide mark. At glutamine 175 the chain carries Pyrrolidone carboxylic acid. At proline 177 the chain carries Proline amide. Residues 206-231 form a disordered region; that stretch reads SRAEEKRQHPGKRFALEDELTEQESL. Pyrrolidone carboxylic acid is present on glutamine 213. Proline 215 is modified (proline amide). The span at 222 to 231 shows a compositional bias: acidic residues; the sequence is EDELTEQESL.

Belongs to the TRH family.

It is found in the secreted. In terms of biological role, functions as a regulator of the biosynthesis of TSH in the anterior pituitary gland and as a neurotransmitter/ neuromodulator in the central and peripheral nervous systems. This is Pro-thyrotropin-releasing hormone (trh) from Carassius auratus (Goldfish).